Reading from the N-terminus, the 217-residue chain is Pro-Pro endopeptidase (217 aa).

An N-terminal signal peptide occupies residues 1-27; that stretch reads MKWDKRVVALILAVMIVCPLFAAPAHA. The region spanning 30–216 is the ATLF-like domain; that stretch reads QSILDKLVVL…TYEFMAKLFA (187 aa). Positions 112–115 are plays a crucial role in substrate specificity; the sequence is SERV. His-137 lines the Zn(2+) pocket. The active-site Proton acceptor is the Glu-138. Residues His-141, Tyr-174, and Glu-181 each coordinate Zn(2+).

Belongs to the peptidase M34 family. Pro-Pro endopeptidase subfamily. Monomer. The cofactor is Zn(2+).

The protein resides in the secreted. The catalysed reaction is The enzyme catalyzes the hydrolytic cleavage of peptide bonds between two proline residues.. Functionally, zinc-dependent endoprotease with a unique preference for proline residues surrounding the scissile bond, which cleaves in a PLP-|-PVP motif. Cleaves the cell surface protein encoded by an adjacent gene, which contains two PPEP-2 cleaving sites and putative extracellular matrix-binding domains. Thereby, may have a role in the regulation of P.alvei adhesion. Is not able to cleave within the PVP-|-PVQ motif, and only shows a very poor cleavage of the VNP-|-PVP motif in vitro, which is the optimal substrate peptide for PPEP-1 from P.difficile. The sequence is that of Pro-Pro endopeptidase from Paenibacillus alvei (strain ATCC 6344 / DSM 29 / NBRC 3343 / NCIMB 9371 / NCTC 6352) (Bacillus alvei).